A 49-amino-acid polypeptide reads, in one-letter code: Osteocalcin (49 aa).

One can recognise a Gla domain in the interval 1–47; sequence YLDHGLGAPAPYVDPLEPKREVCELNPDCDELADQMGFQEAYRRFYG. 4-hydroxyproline is present on Pro-9. Glu-17, Glu-21, Glu-24, and Asp-30 together coordinate Ca(2+). Glu-17, Glu-21, and Glu-24 each carry 4-carboxyglutamate. Cys-23 and Cys-29 form a disulfide bridge.

Belongs to the osteocalcin/matrix Gla protein family. In terms of processing, gamma-carboxyglutamic acid residues are formed by vitamin K dependent carboxylation. These residues are essential for the binding of calcium.

The protein resides in the secreted. Functionally, the carboxylated form is one of the main organic components of the bone matrix, which constitutes 1-2% of the total bone protein: it acts as a negative regulator of bone formation and is required to limit bone formation without impairing bone resorption or mineralization. The carboxylated form binds strongly to apatite and calcium. In terms of biological role, the uncarboxylated form acts as a hormone secreted by osteoblasts, which regulates different cellular processes, such as energy metabolism, male fertility and brain development. Regulates of energy metabolism by acting as a hormone favoring pancreatic beta-cell proliferation, insulin secretion and sensitivity and energy expenditure. Uncarboxylated osteocalcin hormone also promotes testosterone production in the testes: acts as a ligand for G protein-coupled receptor GPRC6A at the surface of Leydig cells, initiating a signaling response that promotes the expression of enzymes required for testosterone synthesis in a CREB-dependent manner. Also acts as a regulator of brain development: osteocalcin hormone crosses the blood-brain barrier and acts as a ligand for GPR158 on neurons, initiating a signaling response that prevents neuronal apoptosis in the hippocampus, favors the synthesis of all monoamine neurotransmitters and inhibits that of gamma-aminobutyric acid (GABA). Osteocalcin also crosses the placenta during pregnancy and maternal osteocalcin is required for fetal brain development. The protein is Osteocalcin of Lama guanicoe (Guanaco).